A 270-amino-acid polypeptide reads, in one-letter code: Bis(5'-nucleosyl)-tetraphosphatase, symmetrical (270 aa).

This sequence belongs to the Ap4A hydrolase family.

It catalyses the reaction P(1),P(4)-bis(5'-adenosyl) tetraphosphate + H2O = 2 ADP + 2 H(+). In terms of biological role, hydrolyzes diadenosine 5',5'''-P1,P4-tetraphosphate to yield ADP. This Thioalkalivibrio sulfidiphilus (strain HL-EbGR7) protein is Bis(5'-nucleosyl)-tetraphosphatase, symmetrical.